Reading from the N-terminus, the 450-residue chain is MKKITKFKDQKILVLGLARSGMAAALVLNELGAIVTVNDGKPFEENKEAQLLLEEGIKVITGSHPIDLLDEDFALMVKNPGIRYDNPMVERAEALNIPVITEVELAYLISEAPIIGITGTNGKTTTTTLIADILNADGQSAKLSGNIGFPASEVAEKASASDTLVMELSSFQLMGIDSFRPKIALITNLFSAHLDYHGSQKAYEAAKWRIQENMTSDDFLILNFNQEKCRNLADKTKATVLAFSTKEKVNGAYSKDGKIYFNDEYIMEVSELSLPGEHNLENALAAIVASKLQGTKNEAIVEVLTSFAGVKHRLQYLGEIDGRKVYNDSKATNILATQKALSGFDNSKLWLLAGGLDRGNGFEELEKDLQDLKGMVVFGQTANKLRLTAEKLNIPVFDSENVAKALEEILPQTQAGDTILLSPACASWDQYKTFEERGDLFIQAFENLKK.

119-125 lines the ATP pocket; that stretch reads GTNGKTT.

Belongs to the MurCDEF family.

It localises to the cytoplasm. It carries out the reaction UDP-N-acetyl-alpha-D-muramoyl-L-alanine + D-glutamate + ATP = UDP-N-acetyl-alpha-D-muramoyl-L-alanyl-D-glutamate + ADP + phosphate + H(+). The protein operates within cell wall biogenesis; peptidoglycan biosynthesis. Cell wall formation. Catalyzes the addition of glutamate to the nucleotide precursor UDP-N-acetylmuramoyl-L-alanine (UMA). This is UDP-N-acetylmuramoylalanine--D-glutamate ligase from Lactococcus lactis subsp. lactis (strain IL1403) (Streptococcus lactis).